The primary structure comprises 350 residues: 4-hydroxythreonine-4-phosphate dehydrogenase (350 aa).

2 residues coordinate substrate: H138 and T139. 3 residues coordinate a divalent metal cation: H173, H218, and H273. Substrate contacts are provided by K281, N290, and R299.

This sequence belongs to the PdxA family. In terms of assembly, homodimer. Requires Zn(2+) as cofactor. Mg(2+) serves as cofactor. It depends on Co(2+) as a cofactor.

It is found in the cytoplasm. The enzyme catalyses 4-(phosphooxy)-L-threonine + NAD(+) = 3-amino-2-oxopropyl phosphate + CO2 + NADH. It functions in the pathway cofactor biosynthesis; pyridoxine 5'-phosphate biosynthesis; pyridoxine 5'-phosphate from D-erythrose 4-phosphate: step 4/5. Functionally, catalyzes the NAD(P)-dependent oxidation of 4-(phosphooxy)-L-threonine (HTP) into 2-amino-3-oxo-4-(phosphooxy)butyric acid which spontaneously decarboxylates to form 3-amino-2-oxopropyl phosphate (AHAP). The sequence is that of 4-hydroxythreonine-4-phosphate dehydrogenase from Xanthobacter autotrophicus (strain ATCC BAA-1158 / Py2).